The following is a 515-amino-acid chain: Bifunctional purine biosynthesis protein PurH (515 aa).

In terms of domain architecture, MGS-like spans 1-145 (MTKRVLISVS…KNHASVTVVV (145 aa)).

This sequence belongs to the PurH family.

The enzyme catalyses (6R)-10-formyltetrahydrofolate + 5-amino-1-(5-phospho-beta-D-ribosyl)imidazole-4-carboxamide = 5-formamido-1-(5-phospho-D-ribosyl)imidazole-4-carboxamide + (6S)-5,6,7,8-tetrahydrofolate. The catalysed reaction is IMP + H2O = 5-formamido-1-(5-phospho-D-ribosyl)imidazole-4-carboxamide. It participates in purine metabolism; IMP biosynthesis via de novo pathway; 5-formamido-1-(5-phospho-D-ribosyl)imidazole-4-carboxamide from 5-amino-1-(5-phospho-D-ribosyl)imidazole-4-carboxamide (10-formyl THF route): step 1/1. It functions in the pathway purine metabolism; IMP biosynthesis via de novo pathway; IMP from 5-formamido-1-(5-phospho-D-ribosyl)imidazole-4-carboxamide: step 1/1. The polypeptide is Bifunctional purine biosynthesis protein PurH (Streptococcus pneumoniae (strain P1031)).